We begin with the raw amino-acid sequence, 190 residues long: Probable calcium-binding protein CML27 (190 aa).

EF-hand domains lie at 27 to 62, 115 to 150, and 153 to 188; these read LNAL…LGLG, DDEG…LGLP, and RNLA…ITVW. 14 residues coordinate Ca(2+): Asp-40, Asn-42, Asp-44, Glu-46, Glu-51, Asp-128, Asp-130, Asp-132, Glu-139, Asp-166, Asp-168, Asp-170, Arg-172, and Glu-177.

Its function is as follows. Potential calcium sensor. The sequence is that of Probable calcium-binding protein CML27 (CML27) from Oryza sativa subsp. japonica (Rice).